Consider the following 706-residue polypeptide: Ribosomal RNA large subunit methyltransferase K/L (706 aa).

The region spanning 43–154 (LMYQSLLWSR…RDMASVALDL (112 aa)) is the THUMP domain.

Belongs to the methyltransferase superfamily. RlmKL family.

It is found in the cytoplasm. The enzyme catalyses guanosine(2445) in 23S rRNA + S-adenosyl-L-methionine = N(2)-methylguanosine(2445) in 23S rRNA + S-adenosyl-L-homocysteine + H(+). It carries out the reaction guanosine(2069) in 23S rRNA + S-adenosyl-L-methionine = N(2)-methylguanosine(2069) in 23S rRNA + S-adenosyl-L-homocysteine + H(+). Specifically methylates the guanine in position 2445 (m2G2445) and the guanine in position 2069 (m7G2069) of 23S rRNA. In Yersinia pseudotuberculosis serotype IB (strain PB1/+), this protein is Ribosomal RNA large subunit methyltransferase K/L.